A 781-amino-acid chain; its full sequence is MLYIYYLFKSLFFHTLFVFSIYKDCPYMRASSPETTSAVKCPFNKTAVEGTHNKDWWPNQLRVDLLHQHSNKSNPLGETFDYAKEFQKLDYAALKRDLHALMTDSQDWWPADFGHYGGLFIRMAWHSAGTYRIGDGRGGAGRGQQRFAPLNSWPDNVSLDKARRLLWPIKKKYGQQISWADLIVLSGNVALESMGFKTFGFAGGRVDTWEPDQDVYWGRETTWLGGDVRYGAVSEGVHHPDEHRGAKEKAAKNSDSRVLENPLAAVQMGLIYVNPEGPDGRPDPLASARDIRETFARMAMNDEETVALIAGGHTFGKTHGAAPADNVGPEPEAGELEQQGLGWHNRFGSGKAGDTITSGLEVTWTKTPTQWSNDFFEHLFGYEWELTKSPAGAYQWVAKNAAATIPHAHDPSKKLLPMMLTSDLALRFDPIYEKISRHFHAHPDQFADVFARAWFKLMHRDMGPRVRYLGPEVPVEELIWQDPVPKVSHVLVDAQDLLALKQKISASGLGISQLVSTAWASASTFRGSDKRGGANGGRLCLAPQSQWEVNQPQQLSVVLETLRRVQTEFNAQAGDKRISLADLIVLAGGVGVEQAAKRAGIVVEVPFVPGRTDALQEQTDVSSFAPLEPFADGFRNYVKGDEVVPSEHLLIDRAQLLTLTAPEMTVLIGGLRVLGANVGGVKHGVFTDRLGTLSNDFFINLLDMGTEWAPVSKERHVFEGRDRRTGVLKWTGTRVDLVFGSNALLRALAEFYAAVDAQEKFVRDFVAAWSKVMHLDRFDLV.

A signal peptide spans 1–20 (MLYIYYLFKSLFFHTLFVFS). Positions 125-272 (WHSAGTYRIG…LAAVQMGLIY (148 aa)) form a cross-link, tryptophyl-tyrosyl-methioninium (Trp-Tyr) (with M-298). His126 functions as the Proton acceptor in the catalytic mechanism. The interval 237 to 256 (VHHPDEHRGAKEKAAKNSDS) is disordered. The tryptophyl-tyrosyl-methioninium (Tyr-Met) (with W-125) cross-link spans 272 to 298 (YVNPEGPDGRPDPLASARDIRETFARM). His313 is a binding site for heme b. Residues 317-336 (KTHGAAPADNVGPEPEAGEL) form a disordered region.

Belongs to the peroxidase family. Peroxidase/catalase subfamily. As to quaternary structure, homodimer or homotetramer. Heme b serves as cofactor. Post-translationally, formation of the three residue Trp-Tyr-Met cross-link is important for the catalase, but not the peroxidase activity of the enzyme.

It catalyses the reaction H2O2 + AH2 = A + 2 H2O. The enzyme catalyses 2 H2O2 = O2 + 2 H2O. In terms of biological role, bifunctional enzyme with both catalase and broad-spectrum peroxidase activity. The sequence is that of Catalase-peroxidase from Xylella fastidiosa (strain 9a5c).